The following is a 325-amino-acid chain: Acetyl-coenzyme A carboxylase carboxyl transferase subunit alpha (325 aa).

In terms of domain architecture, CoA carboxyltransferase C-terminal spans 35 to 292; sequence EIEKLEARLA…DRVLRRSLKQ (258 aa).

The protein belongs to the AccA family. Acetyl-CoA carboxylase is a heterohexamer composed of biotin carboxyl carrier protein (AccB), biotin carboxylase (AccC) and two subunits each of ACCase subunit alpha (AccA) and ACCase subunit beta (AccD).

Its subcellular location is the cytoplasm. It carries out the reaction N(6)-carboxybiotinyl-L-lysyl-[protein] + acetyl-CoA = N(6)-biotinyl-L-lysyl-[protein] + malonyl-CoA. It functions in the pathway lipid metabolism; malonyl-CoA biosynthesis; malonyl-CoA from acetyl-CoA: step 1/1. In terms of biological role, component of the acetyl coenzyme A carboxylase (ACC) complex. First, biotin carboxylase catalyzes the carboxylation of biotin on its carrier protein (BCCP) and then the CO(2) group is transferred by the carboxyltransferase to acetyl-CoA to form malonyl-CoA. The sequence is that of Acetyl-coenzyme A carboxylase carboxyl transferase subunit alpha from Geobacillus kaustophilus (strain HTA426).